Reading from the N-terminus, the 182-residue chain is CDP-diacylglycerol--glycerol-3-phosphate 3-phosphatidyltransferase (182 aa).

Residues glutamine 2–phenylalanine 12 are Cytoplasmic-facing. Residues arginine 13 to leucine 37 form a helical membrane-spanning segment. Topologically, residues isoleucine 38 to threonine 60 are periplasmic. Residues arginine 61–leucine 81 form a helical membrane-spanning segment. Residues valine 82 to tyrosine 86 lie on the Cytoplasmic side of the membrane. Residues histidine 87–alanine 107 form a helical membrane-spanning segment. Topologically, residues leucine 108–proline 145 are periplasmic. A helical membrane pass occupies residues asparagine 146 to methionine 168. Topologically, residues leucine 169–aspartate 181 are cytoplasmic.

The protein belongs to the CDP-alcohol phosphatidyltransferase class-I family.

Its subcellular location is the cell inner membrane. It catalyses the reaction a CDP-1,2-diacyl-sn-glycerol + sn-glycerol 3-phosphate = a 1,2-diacyl-sn-glycero-3-phospho-(1'-sn-glycero-3'-phosphate) + CMP + H(+). It participates in phospholipid metabolism; phosphatidylglycerol biosynthesis; phosphatidylglycerol from CDP-diacylglycerol: step 1/2. Functionally, catalyzes the conversion of cytidine diphosphate diacylglycerol (CDP-DG) and glycerol 3-phosphate into phosphatidylglycerol. Essential for the synthesis of anionic phospholipids, thereby playing a role in balancing the ratio of zwitterionic and anionic phospholipids, which is thought to be important for normal membrane function. In Shigella boydii serotype 4 (strain Sb227), this protein is CDP-diacylglycerol--glycerol-3-phosphate 3-phosphatidyltransferase.